We begin with the raw amino-acid sequence, 257 residues long: Glucosamine-6-phosphate deaminase (257 aa).

The active-site Proton acceptor; for enolization step is the aspartate 64. The active-site For ring-opening step is asparagine 133. Catalysis depends on histidine 135, which acts as the Proton acceptor; for ring-opening step. The active-site For ring-opening step is the glutamate 140.

The protein belongs to the glucosamine/galactosamine-6-phosphate isomerase family. NagB subfamily.

It catalyses the reaction alpha-D-glucosamine 6-phosphate + H2O = beta-D-fructose 6-phosphate + NH4(+). It participates in amino-sugar metabolism; N-acetylneuraminate degradation; D-fructose 6-phosphate from N-acetylneuraminate: step 5/5. Its function is as follows. Catalyzes the reversible isomerization-deamination of glucosamine 6-phosphate (GlcN6P) to form fructose 6-phosphate (Fru6P) and ammonium ion. This Corynebacterium urealyticum (strain ATCC 43042 / DSM 7109) protein is Glucosamine-6-phosphate deaminase.